The chain runs to 507 residues: ATP synthase subunit alpha, mitochondrial (507 aa).

An ATP-binding site is contributed by 171–178 (GDRQTGKT).

It belongs to the ATPase alpha/beta chains family. F-type ATPases have 2 components, CF(1) - the catalytic core - and CF(0) - the membrane proton channel. CF(1) has five subunits: alpha(3), beta(3), gamma(1), delta(1), epsilon(1). CF(0) has three main subunits: a, b and c.

The protein resides in the mitochondrion. Its subcellular location is the mitochondrion inner membrane. Its function is as follows. Mitochondrial membrane ATP synthase (F(1)F(0) ATP synthase or Complex V) produces ATP from ADP in the presence of a proton gradient across the membrane which is generated by electron transport complexes of the respiratory chain. F-type ATPases consist of two structural domains, F(1) - containing the extramembraneous catalytic core, and F(0) - containing the membrane proton channel, linked together by a central stalk and a peripheral stalk. During catalysis, ATP synthesis in the catalytic domain of F(1) is coupled via a rotary mechanism of the central stalk subunits to proton translocation. Subunits alpha and beta form the catalytic core in F(1). Rotation of the central stalk against the surrounding alpha(3)beta(3) subunits leads to hydrolysis of ATP in three separate catalytic sites on the beta subunits. Subunit alpha does not bear the catalytic high-affinity ATP-binding sites. The polypeptide is ATP synthase subunit alpha, mitochondrial (ATPA) (Arabidopsis thaliana (Mouse-ear cress)).